The following is a 464-amino-acid chain: Soluble pyridine nucleotide transhydrogenase (464 aa).

35-44 (DSRRQVGGNC) is an FAD binding site.

The protein belongs to the class-I pyridine nucleotide-disulfide oxidoreductase family. It depends on FAD as a cofactor.

It is found in the cytoplasm. It carries out the reaction NAD(+) + NADPH = NADH + NADP(+). Functionally, conversion of NADPH, generated by peripheral catabolic pathways, to NADH, which can enter the respiratory chain for energy generation. This Pseudomonas entomophila (strain L48) protein is Soluble pyridine nucleotide transhydrogenase.